Here is an 807-residue protein sequence, read N- to C-terminus: MPKQDSLWLKSLRWIQKHLVHTIVVPQDPFADLNLDASRPLAYVMKTESLSDIAALSEITTKLGLPSPYEPLVVNGVVAPRVVCLEGRKPLFGERASNEPFLECFMRLLAVHKEKPELDIQLVPVSLYWGRTPGKEDDTMKAAVLERENPTWLRKCLMILFLGRHNFVQFSNAVSLRYMADEHGTDMGIAHKLARVARVHFRRQRKVMTGPVLPNRQALFHSLLKSESLRKAIQEEAASKKISETQARETAIEYLDEIAANYSDSLVRIAERFLTWLWNKLYSGINIKGAEQIRQLHHDGHEIVYVPCHRSHMDYLLLSYILYYQGMVPPHIAAGINLNFWPAGPLFRRGGAFFIRRSFNGNKLYTAVFREYLDQLFAKGYSVEYFSEGGRSRTGRLLAPKTGMIAMTINSVLRGIERPVTLVPVYLGYDHVMEVATYHKELSGKKKQKESVWQVFGAIRKLGNFGQGYVNFGEPITLQNFLNETAPNWRTEVADDPEQKPTWLTPAVNVLANRVMTRINDAAAASSITLTSLVLLASEQNALERCLLERQLDLYLTLLKRVPYTSFTSVAEGDGKHLVQQGLELNKFSISADPLGEIVSIDANQAITMTYYRNNIIHLFIIPSLIASCLTNNKQISRASILGIVNDFYPLLKAELFMGIKDLPSYVNQVLDLFIEQGLVQESDTLSVVTERTSQMLLLAGSVSETLQRYAIIFNLLAHRPKMERSELESESHLLAQRLGALHGITAPEFYDKKLYNTLSVKLKELGYFSEKEDKSDVERIRDQANSLLRASVRQTIVASVTAEHIV.

Positions 308-313 match the HXXXXD motif motif; that stretch reads CHRSHM.

The protein belongs to the GPAT/DAPAT family.

The protein resides in the cell inner membrane. It catalyses the reaction sn-glycerol 3-phosphate + an acyl-CoA = a 1-acyl-sn-glycero-3-phosphate + CoA. The protein operates within phospholipid metabolism; CDP-diacylglycerol biosynthesis; CDP-diacylglycerol from sn-glycerol 3-phosphate: step 1/3. The chain is Glycerol-3-phosphate acyltransferase from Shewanella sp. (strain MR-7).